The sequence spans 131 residues: Cruxhalorhodopsin-1 (131 aa).

Residues 1–11 form a helical membrane-spanning segment; it reads PMILLALGLLA. The Cytoplasmic segment spans residues 12 to 14; that stretch reads DTD. Residues 15-38 traverse the membrane as a helical segment; it reads IASLFTAITMDIGMCVTGLAAALI. The Extracellular portion of the chain corresponds to 39–41; the sequence is TSS. Residues 42–64 form a helical membrane-spanning segment; that stretch reads HLLRWVFYGISCAFFVAVLYVLL. The Cytoplasmic segment spans residues 65 to 76; that stretch reads VQWPADAEAAGT. The helical transmembrane segment at 77–100 threads the bilayer; sequence SEIFGTLKILTVVLWLGYPILWAL. At 101 to 109 the chain is on the extracellular side; the sequence is GSEGVALLS. The chain crosses the membrane as a helical span at residues 110–131; the sequence is VGVTSWGYSGLDILAKYVFAFI. Position 125 is an N6-(retinylidene)lysine (K125).

Belongs to the archaeal/bacterial/fungal opsin family.

It is found in the cell membrane. Functionally, light-driven chloride pump. The chain is Cruxhalorhodopsin-1 (choP1) from Haloarcula argentinensis.